Reading from the N-terminus, the 259-residue chain is Triosephosphate isomerase (259 aa).

A substrate-binding site is contributed by 10–12 (NWK). Histidine 102 serves as the catalytic Electrophile. The active-site Proton acceptor is the glutamate 174. Substrate-binding positions include glycine 180, serine 220, and 241–242 (GG).

The protein belongs to the triosephosphate isomerase family. Homodimer.

The protein resides in the cytoplasm. The enzyme catalyses D-glyceraldehyde 3-phosphate = dihydroxyacetone phosphate. The protein operates within carbohydrate biosynthesis; gluconeogenesis. It participates in carbohydrate degradation; glycolysis; D-glyceraldehyde 3-phosphate from glycerone phosphate: step 1/1. In terms of biological role, involved in the gluconeogenesis. Catalyzes stereospecifically the conversion of dihydroxyacetone phosphate (DHAP) to D-glyceraldehyde-3-phosphate (G3P). The protein is Triosephosphate isomerase of Cutibacterium acnes (strain DSM 16379 / KPA171202) (Propionibacterium acnes).